The primary structure comprises 515 residues: Tripartite motif-containing protein 5 (515 aa).

An N-acetylalanine modification is found at Ala2. The RING-type zinc finger occupies Cys15–Arg60. Phosphoserine is present on Ser87. A B box-type zinc finger spans residues Gln92 to Met133. Zn(2+) contacts are provided by Cys97, His100, Cys119, and His125. A coiled-coil region spans residues Ala137–Gln225. A required for interaction with GABARAP and for autophagy region spans residues Phe187–Asn200. Positions Leu283–Ser515 constitute a B30.2/SPRY domain.

It belongs to the TRIM/RBCC family. As to quaternary structure, can form homodimers and homotrimers. In addition to lower-order dimerization, also exhibits a higher-order multimerization and both low- and high-order multimerizations are essential for its restriction activity. Interacts with BTBD1 and BTBD2. Interacts with PSMC4, PSMC5, PSMD7 and HSPA8/HSC70. Interacts (via B30.2/SPRY domain) with HSPA1A/B. Interacts with PSMC2, MAP3K7/TAK1, TAB2 and TAB3. Interacts with SQSTM1. Interacts with TRIM6 and TRIM34. Interacts with ULK1 (phosphorylated form), GABARAP, GABARAPL1, GABARAPL2, MAP1LC3A, MAP1LC3C and BECN1. Degraded in a proteasome-independent fashion in the absence of viral infection but in a proteasome-dependent fashion following exposure to restriction sensitive virus. In terms of processing, autoubiquitinated in a RING finger- and UBE2D2-dependent manner. Monoubiquitinated by TRIM21. Deubiquitinated by Yersinia YopJ. Ubiquitination may not lead to proteasomal degradation.

The protein localises to the cytoplasm. The protein resides in the nucleus. The enzyme catalyses S-ubiquitinyl-[E2 ubiquitin-conjugating enzyme]-L-cysteine + [acceptor protein]-L-lysine = [E2 ubiquitin-conjugating enzyme]-L-cysteine + N(6)-ubiquitinyl-[acceptor protein]-L-lysine.. It functions in the pathway protein modification; protein ubiquitination. Its function is as follows. Capsid-specific restriction factor that prevents infection from non-host-adapted retroviruses. Blocks viral replication early in the life cycle, after viral entry but before reverse transcription. In addition to acting as a capsid-specific restriction factor, also acts as a pattern recognition receptor that activates innate immune signaling in response to the retroviral capsid lattice. Binding to the viral capsid triggers its E3 ubiquitin ligase activity, and in concert with the heterodimeric ubiquitin conjugating enzyme complex UBE2V1-UBE2N (also known as UBC13-UEV1A complex) generates 'Lys-63'-linked polyubiquitin chains, which in turn are catalysts in the autophosphorylation of the MAP3K7/TAK1 complex (includes TAK1, TAB2, and TAB3). Activation of the MAP3K7/TAK1 complex by autophosphorylation results in the induction and expression of NF-kappa-B and MAPK-responsive inflammatory genes, thereby leading to an innate immune response in the infected cell. Restricts infection by human immunodeficiency virus type 1 (HIV-1), simian immunodeficiency virus (SIV-mac) and N-tropic murine leukemia viruse (N-MLV). Plays a role in regulating autophagy through activation of autophagy regulator BECN1 by causing its dissociation from its inhibitors BCL2 and TAB2. This Chlorocebus tantalus (Tantalus monkey) protein is Tripartite motif-containing protein 5 (TRIM5).